We begin with the raw amino-acid sequence, 124 residues long: uncharacterized protein (124 aa).

A helical membrane pass occupies residues 83–100 (VTCFSLYTICYRIVLIWA).

The protein localises to the membrane. This is an uncharacterized protein from Saccharomyces cerevisiae (strain ATCC 204508 / S288c) (Baker's yeast).